Here is a 246-residue protein sequence, read N- to C-terminus: MyoD family inhibitor domain-containing protein (246 aa).

Residues 1 to 71 form a disordered region; it reads MSGAGEALAP…WGNPSDGELI (71 aa). The span at 33–43 shows a compositional bias: basic and acidic residues; it reads KCDKDNTEKDI. The span at 44–63 shows a compositional bias: polar residues; that stretch reads TQATNSHFTHGEMQDQSIWG. Positions 74-246 constitute an MDFI domain; the sequence is QPQRLPQLQT…MECCGICFPS (173 aa). Phosphoserine occurs at positions 128, 140, and 143.

This sequence belongs to the MDFI family. Interacts with HAND1; the interaction sequesters HAND1 into the nucleolus and inhibits its activity. Interacts (via C-terminus) with ZIC2. Interacts (via C-terminus) with AXIN1, the histidine-rich region of CCNT1/cyclin-T and weakly with LEF1. Interacts with CCNT2. Interacts with GATA2. Interacts (via C-terminus) with Piezo channel composed of PIEZO1 or PIEZO2; the interaction prolongs Piezo channel inactivation. In terms of assembly, (Microbial infection) Interacts (via C-terminus) with HIV-1 Tat and Rev. Post-translationally, palmitoylated. In terms of tissue distribution, expressed in lymphatic tissues. Detected in the spleen, thymus, peripheral blood leukocytes as well as prostate, uterus and small intestine. Expressed in lymphatic endothelial cells.

The protein localises to the nucleus. The protein resides in the nucleolus. Its subcellular location is the cytoplasm. It localises to the secreted. In terms of biological role, required to control the activity of various transcription factors through their sequestration in the cytoplasm. Retains nuclear Zic proteins ZIC1, ZIC2 and ZIC3 in the cytoplasm and inhibits their transcriptional activation. Modulates the expression from cellular promoters. Binds to the axin complex, resulting in an increase in the level of free beta-catenin. Affects axin regulation of the WNT and JNK signaling pathways. Involved in the development of lymphatic vessel valves. Required to promote lymphatic endothelial cell migration, in a process that involves down-regulation of integrin beta 1 activation and control of cell adhesion to the extracellular matrix. Regulates the activity of mechanosensitive Piezo channel. Functionally, (Microbial infection) Modulates the expression from viral promoters. Down-regulates Tat-dependent transcription of the human immunodeficiency virus type 1 (HIV-1) LTR by interacting with HIV-1 Tat and Rev and impairing their nuclear import, probably by rendering the NLS domains inaccessible to importin-beta. Also stimulates activation of human T-cell leukemia virus type I (HTLV-I) LTR. The protein is MyoD family inhibitor domain-containing protein of Homo sapiens (Human).